The chain runs to 325 residues: MATRRLTDAFLLLRNNSIQNRQLLAEQVSSHITSSPLHSRSIAAELDELADDRMALVSGISLDPEAAIGVTKRPPPKWVDGVDEIQYDVGRIKQKMKELASLHDKHLNRPTLDDSSEEEHAIEITTQEITQLFHRCQRAVQALPSRARACSEQEGRLLGNVVASLAQALQELSTSFRHAQSGYLKRMKNREERSQHFFDTSVPLMDDGDDNTLYHRGFTEDQLVLVEQNTLMVEEREREIRQIVQSISDLNEIFRDLGAMIVEQGTVLDRIDYNVEQSCIKTEDGLKQLHKAEQYQKKNRKMLVILILFVIIIVLIVVLVGVKSR.

At 1–301 the chain is on the cytoplasmic side; that stretch reads MATRRLTDAF…AEQYQKKNRK (301 aa). At Ser-41 the chain carries Phosphoserine. Residues 230–292 form the t-SNARE coiled-coil homology domain; the sequence is TLMVEERERE…EDGLKQLHKA (63 aa). The helical; Anchor for type IV membrane protein transmembrane segment at 302 to 322 threads the bilayer; the sequence is MLVILILFVIIIVLIVVLVGV. Residues 323–325 lie on the Vesicular side of the membrane; sequence KSR.

The protein belongs to the syntaxin family. Interacts with GCC2. Interacts with BAIAP3; this interaction is increased in the presence of calcium. As to expression, ubiquitous.

The protein localises to the golgi apparatus membrane. The protein resides in the cytoplasm. Functionally, SNARE involved in vesicular transport from the late endosomes to the trans-Golgi network. The polypeptide is Syntaxin-16 (STX16) (Homo sapiens (Human)).